The chain runs to 681 residues: Ribosomal L1 domain-containing protein CG13096 (681 aa).

2 disordered regions span residues 1-248 and 579-681; these read MVKV…AKSK and DAAP…DDEE. Ser15 and Ser17 each carry phosphoserine. The span at 54 to 74 shows a compositional bias: basic and acidic residues; sequence VKKDAIKKEPEVSKKGAEKKQ. Ser89 bears the Phosphoserine mark. Positions 103-112 are enriched in low complexity; that stretch reads KPAASGAPVG. Position 128 is a phosphoserine (Ser128). The segment covering 189 to 217 has biased composition (low complexity); sequence QAAPAKPAKAQPASQLQKKAKAVQKLSKP. The segment covering 599-610 has biased composition (basic and acidic residues); sequence KESSSEGAKADA. A compositionally biased stretch (acidic residues) spans 611 to 681; it reads ESDEEEEVEE…EDDDDDDDEE (71 aa).

It belongs to the universal ribosomal protein uL1 family. Highly divergent.

The sequence is that of Ribosomal L1 domain-containing protein CG13096 from Drosophila melanogaster (Fruit fly).